A 208-amino-acid chain; its full sequence is Fibroblast growth factor 6 (208 aa).

An N-terminal signal peptide occupies residues 1 to 37; it reads MALGQRLFITMSRGAGRVQGTLQALVFLGVLVGMVVP. N-linked (GlcNAc...) asparagine glycosylation is present at Asn-45. A disulfide bridge links Cys-90 with Cys-157.

It belongs to the heparin-binding growth factors family. Interacts with FGFR1, FGFR2 and FGFR4. Affinity between fibroblast growth factors (FGFs) and their receptors is increased by heparan sulfate glycosaminoglycans that function as coreceptors. In terms of tissue distribution, embryos, adult muscles and adult testis.

The protein localises to the secreted. It localises to the extracellular space. Functionally, plays an important role in the regulation of cell proliferation, cell differentiation, angiogenesis and myogenesis, and is required for normal muscle regeneration. This chain is Fibroblast growth factor 6 (Fgf6), found in Mus musculus (Mouse).